The chain runs to 193 residues: Peptidyl-tRNA hydrolase (193 aa).

Residue histidine 17 participates in tRNA binding. Histidine 22 functions as the Proton acceptor in the catalytic mechanism. TRNA-binding residues include phenylalanine 68, asparagine 70, and asparagine 116.

The protein belongs to the PTH family. As to quaternary structure, monomer.

Its subcellular location is the cytoplasm. The enzyme catalyses an N-acyl-L-alpha-aminoacyl-tRNA + H2O = an N-acyl-L-amino acid + a tRNA + H(+). Functionally, hydrolyzes ribosome-free peptidyl-tRNAs (with 1 or more amino acids incorporated), which drop off the ribosome during protein synthesis, or as a result of ribosome stalling. Catalyzes the release of premature peptidyl moieties from peptidyl-tRNA molecules trapped in stalled 50S ribosomal subunits, and thus maintains levels of free tRNAs and 50S ribosomes. The sequence is that of Peptidyl-tRNA hydrolase from Xanthomonas axonopodis pv. citri (strain 306).